The following is a 440-amino-acid chain: tRNA(Ile)-lysidine synthase (440 aa).

Residue 31 to 36 (SGGADS) coordinates ATP.

This sequence belongs to the tRNA(Ile)-lysidine synthase family.

It is found in the cytoplasm. It catalyses the reaction cytidine(34) in tRNA(Ile2) + L-lysine + ATP = lysidine(34) in tRNA(Ile2) + AMP + diphosphate + H(+). Functionally, ligates lysine onto the cytidine present at position 34 of the AUA codon-specific tRNA(Ile) that contains the anticodon CAU, in an ATP-dependent manner. Cytidine is converted to lysidine, thus changing the amino acid specificity of the tRNA from methionine to isoleucine. This is tRNA(Ile)-lysidine synthase from Borrelia garinii subsp. bavariensis (strain ATCC BAA-2496 / DSM 23469 / PBi) (Borreliella bavariensis).